Consider the following 531-residue polypeptide: 2,3-bisphosphoglycerate-independent phosphoglycerate mutase (531 aa).

Mn(2+) is bound by residues D15 and S65. The Phosphoserine intermediate role is filled by S65. Substrate-binding positions include H126, 155 to 156, R187, R193, 257 to 260, and K330; these read RD and RPDR. Residues D397, H401, D438, H439, and H456 each coordinate Mn(2+).

This sequence belongs to the BPG-independent phosphoglycerate mutase family. As to quaternary structure, monomer. Requires Mn(2+) as cofactor.

It catalyses the reaction (2R)-2-phosphoglycerate = (2R)-3-phosphoglycerate. Its pathway is carbohydrate degradation; glycolysis; pyruvate from D-glyceraldehyde 3-phosphate: step 3/5. Its function is as follows. Catalyzes the interconversion of 2-phosphoglycerate and 3-phosphoglycerate. The protein is 2,3-bisphosphoglycerate-independent phosphoglycerate mutase of Thermosynechococcus vestitus (strain NIES-2133 / IAM M-273 / BP-1).